Here is a 211-residue protein sequence, read N- to C-terminus: Endonuclease V (211 aa).

2 residues coordinate Mg(2+): Asp37 and Asp102.

The protein belongs to the endonuclease V family. Mg(2+) is required as a cofactor.

The protein localises to the cytoplasm. It catalyses the reaction Endonucleolytic cleavage at apurinic or apyrimidinic sites to products with a 5'-phosphate.. DNA repair enzyme involved in the repair of deaminated bases. Selectively cleaves double-stranded DNA at the second phosphodiester bond 3' to a deoxyinosine leaving behind the intact lesion on the nicked DNA. The protein is Endonuclease V of Ignicoccus hospitalis (strain KIN4/I / DSM 18386 / JCM 14125).